The sequence spans 269 residues: Pertussis toxin subunit 1 homolog (269 aa).

A signal peptide spans Met-1 to Ala-34.

This sequence belongs to the bacterial exotoxin subunit A family.

The polypeptide is Pertussis toxin subunit 1 homolog (ptxA) (Bordetella bronchiseptica (strain ATCC BAA-588 / NCTC 13252 / RB50) (Alcaligenes bronchisepticus)).